A 955-amino-acid polypeptide reads, in one-letter code: Thrombospondin-4 (955 aa).

A signal peptide spans Met1–Ala24. The Laminin G-like domain maps to Gln25–Gly192. One can recognise an EGF-like 1 domain in the interval Pro281–Thr320. 21 disulfide bridges follow: Cys285–Cys296, Cys290–Cys305, Cys308–Cys319, Cys325–Cys336, Cys330–Cys345, Cys348–Cys372, Cys378–Cys392, Cys386–Cys401, Cys404–Cys416, Cys422–Cys435, Cys429–Cys445, Cys447–Cys458, Cys474–Cys479, Cys484–Cys504, Cys520–Cys540, Cys543–Cys563, Cys579–Cys599, Cys602–Cys622, Cys640–Cys660, Cys680–Cys700, and Cys716–Cys937. Residues Asp321–Gln358 form the EGF-like 2; calcium-binding domain. An EGF-like 3; calcium-binding domain is found at Asp374–Gly415. The region spanning Pro418 to Gly459 is the EGF-like 4 domain. 8 TSP type-3 repeats span residues Lys460 to Gln492, Glu493 to Gln528, Lys529 to Gln551, Arg552 to Gln587, Lys588 to Gln610, Ser611 to Gln648, Leu649 to Gln688, and Glu689 to Leu724. An N-linked (GlcNAc...) asparagine glycan is attached at Asn609. Residues Gln610–Asp678 are disordered. The segment covering Thr637–Leu649 has biased composition (polar residues). A compositionally biased stretch (acidic residues) spans Gly657–Gly668. A TSP C-terminal domain is found at Arg728–Pro942. A glycan (N-linked (GlcNAc...) asparagine) is linked at Asn938.

The protein belongs to the thrombospondin family. Homotrimer; disulfide-linked.

It is found in the endoplasmic reticulum. Its subcellular location is the sarcoplasmic reticulum. The protein resides in the secreted. It localises to the extracellular space. The protein localises to the extracellular matrix. Adhesive glycoprotein that mediates cell-to-cell and cell-to-matrix interactions and may be involved in various processes including cellular proliferation, migration, adhesion and attachment. May play a role in ER stress response. May participate in the genesis and function of cardiac and skeletal muscle. This is Thrombospondin-4 (thbs4) from Xenopus laevis (African clawed frog).